A 154-amino-acid polypeptide reads, in one-letter code: 3-hydroxyacyl-[acyl-carrier-protein] dehydratase FabZ (154 aa).

His54 is a catalytic residue.

It belongs to the thioester dehydratase family. FabZ subfamily.

The protein resides in the cytoplasm. It carries out the reaction a (3R)-hydroxyacyl-[ACP] = a (2E)-enoyl-[ACP] + H2O. Functionally, involved in unsaturated fatty acids biosynthesis. Catalyzes the dehydration of short chain beta-hydroxyacyl-ACPs and long chain saturated and unsaturated beta-hydroxyacyl-ACPs. The polypeptide is 3-hydroxyacyl-[acyl-carrier-protein] dehydratase FabZ (Chlamydia caviae (strain ATCC VR-813 / DSM 19441 / 03DC25 / GPIC) (Chlamydophila caviae)).